The sequence spans 514 residues: Peptide chain release factor 3 (514 aa).

Positions 8–268 constitute a tr-type G domain; sequence KKRRTFAIIS…SFLAFAPEPH (261 aa). GTP contacts are provided by residues 17–24, 85–89, and 139–142; these read SHPDAGKT, DTPGH, and NKLD.

The protein belongs to the TRAFAC class translation factor GTPase superfamily. Classic translation factor GTPase family. PrfC subfamily.

It is found in the cytoplasm. Functionally, increases the formation of ribosomal termination complexes and stimulates activities of RF-1 and RF-2. It binds guanine nucleotides and has strong preference for UGA stop codons. It may interact directly with the ribosome. The stimulation of RF-1 and RF-2 is significantly reduced by GTP and GDP, but not by GMP. This chain is Peptide chain release factor 3, found in Streptococcus mutans serotype c (strain ATCC 700610 / UA159).